The primary structure comprises 389 residues: 1-deoxy-D-xylulose 5-phosphate reductoisomerase (389 aa).

Residues serine 11, glycine 12, serine 13, valine 14, asparagine 39, and asparagine 122 each contribute to the NADPH site. Lysine 123 serves as a coordination point for 1-deoxy-D-xylulose 5-phosphate. Glutamate 124 serves as a coordination point for NADPH. A Mn(2+)-binding site is contributed by aspartate 148. Positions 149, 150, 174, and 197 each coordinate 1-deoxy-D-xylulose 5-phosphate. Residue glutamate 150 participates in Mn(2+) binding. NADPH is bound at residue glycine 203. 1-deoxy-D-xylulose 5-phosphate is bound by residues serine 210, asparagine 215, lysine 216, and glutamate 219. Glutamate 219 is a binding site for Mn(2+).

This sequence belongs to the DXR family. Mg(2+) serves as cofactor. Requires Mn(2+) as cofactor.

It catalyses the reaction 2-C-methyl-D-erythritol 4-phosphate + NADP(+) = 1-deoxy-D-xylulose 5-phosphate + NADPH + H(+). The protein operates within isoprenoid biosynthesis; isopentenyl diphosphate biosynthesis via DXP pathway; isopentenyl diphosphate from 1-deoxy-D-xylulose 5-phosphate: step 1/6. Catalyzes the NADPH-dependent rearrangement and reduction of 1-deoxy-D-xylulose-5-phosphate (DXP) to 2-C-methyl-D-erythritol 4-phosphate (MEP). The protein is 1-deoxy-D-xylulose 5-phosphate reductoisomerase of Leptospira interrogans serogroup Icterohaemorrhagiae serovar copenhageni (strain Fiocruz L1-130).